Here is a 712-residue protein sequence, read N- to C-terminus: Protein phosphatase 1 regulatory subunit 37 (712 aa).

Residues 1-12 show a composition bias toward pro residues; it reads MEIPPQEAPPGP. Positions 1 to 47 are disordered; sequence MEIPPQEAPPGPGADADADAEAETEEASAEAESPTGTSPPADGRLKA. Acidic residues predominate over residues 16–29; it reads ADADAEAETEEASA. Serine 56 and serine 62 each carry phosphoserine. LRR repeat units follow at residues 226–246, 254–275, 283–303, 312–332, and 340–360; these read SLAV…MLLA, NLRE…AQLG, SLQI…AYIC, GLVT…AFLG, and SLET…RNLK. Positions 492–680 are disordered; that stretch reads ESGELPAVGS…PPGLEAKGGS (189 aa). Residues 514–531 are compositionally biased toward acidic residues; it reads SDSDSDSDREEQEEEEED. Serine 583 carries the phosphoserine modification. The segment covering 605–626 has biased composition (pro residues); that stretch reads PPVPPTFVSSPPPSPPSPPASP. Polar residues predominate over residues 639–651; sequence SEAQPQLEPSQAG.

Belongs to the PPP1R37 family. Interacts with PPP1CA.

Functionally, inhibits phosphatase activity of protein phosphatase 1 (PP1) complexes. The chain is Protein phosphatase 1 regulatory subunit 37 (Ppp1r37) from Mus musculus (Mouse).